Reading from the N-terminus, the 204-residue chain is Thymidine kinase (204 aa).

ATP contacts are provided by residues glycine 23–threonine 30 and aspartate 95–glutamine 98. Catalysis depends on glutamate 96, which acts as the Proton acceptor. Residues cysteine 152, cysteine 155, cysteine 184, and cysteine 187 each coordinate Zn(2+).

Belongs to the thymidine kinase family. As to quaternary structure, homotetramer.

The protein localises to the cytoplasm. The enzyme catalyses thymidine + ATP = dTMP + ADP + H(+). This is Thymidine kinase from Porphyromonas gingivalis (strain ATCC BAA-308 / W83).